A 485-amino-acid chain; its full sequence is N-succinylglutamate 5-semialdehyde dehydrogenase (485 aa).

An NAD(+)-binding site is contributed by 220 to 225 (GSANTG). Residues glutamate 243 and cysteine 278 contribute to the active site.

Belongs to the aldehyde dehydrogenase family. AstD subfamily.

The enzyme catalyses N-succinyl-L-glutamate 5-semialdehyde + NAD(+) + H2O = N-succinyl-L-glutamate + NADH + 2 H(+). The protein operates within amino-acid degradation; L-arginine degradation via AST pathway; L-glutamate and succinate from L-arginine: step 4/5. Catalyzes the NAD-dependent reduction of succinylglutamate semialdehyde into succinylglutamate. This Aliivibrio fischeri (strain ATCC 700601 / ES114) (Vibrio fischeri) protein is N-succinylglutamate 5-semialdehyde dehydrogenase.